The primary structure comprises 215 residues: UPF0323 lipoprotein jhp_0217 (215 aa).

Positions 1–27 are cleaved as a signal peptide; the sequence is MKKPYRKISDYAIVGGLSALVMVSIVG. The N-palmitoyl cysteine moiety is linked to residue cysteine 28. Cysteine 28 is lipidated: S-diacylglycerol cysteine. Residues 158–169 show a composition bias toward polar residues; the sequence is QRTYKSPQAYQR. The disordered stretch occupies residues 158-215; the sequence is QRTYKSPQAYQRSQNSFSKSAPSASSMGTASKGQSGFFGSSRPTSSPAISSGTRGFNA. Low complexity predominate over residues 170–183; the sequence is SQNSFSKSAPSASS. Residues 184-195 are compositionally biased toward polar residues; the sequence is MGTASKGQSGFF. A compositionally biased stretch (low complexity) spans 197–208; that stretch reads SSRPTSSPAISS.

The protein belongs to the UPF0323 family.

It localises to the cell membrane. The polypeptide is UPF0323 lipoprotein jhp_0217 (Helicobacter pylori (strain J99 / ATCC 700824) (Campylobacter pylori J99)).